Reading from the N-terminus, the 216-residue chain is Phosphoribosylformylglycinamidine synthase subunit PurQ (216 aa).

The Glutamine amidotransferase type-1 domain occupies 2–216 (SIGVIVFPGS…GRRMLEALLG (215 aa)). Cys-86 functions as the Nucleophile in the catalytic mechanism. Active-site residues include His-193 and Glu-195.

Part of the FGAM synthase complex composed of 1 PurL, 1 PurQ and 2 PurS subunits.

It is found in the cytoplasm. The catalysed reaction is N(2)-formyl-N(1)-(5-phospho-beta-D-ribosyl)glycinamide + L-glutamine + ATP + H2O = 2-formamido-N(1)-(5-O-phospho-beta-D-ribosyl)acetamidine + L-glutamate + ADP + phosphate + H(+). The enzyme catalyses L-glutamine + H2O = L-glutamate + NH4(+). It functions in the pathway purine metabolism; IMP biosynthesis via de novo pathway; 5-amino-1-(5-phospho-D-ribosyl)imidazole from N(2)-formyl-N(1)-(5-phospho-D-ribosyl)glycinamide: step 1/2. Its function is as follows. Part of the phosphoribosylformylglycinamidine synthase complex involved in the purines biosynthetic pathway. Catalyzes the ATP-dependent conversion of formylglycinamide ribonucleotide (FGAR) and glutamine to yield formylglycinamidine ribonucleotide (FGAM) and glutamate. The FGAM synthase complex is composed of three subunits. PurQ produces an ammonia molecule by converting glutamine to glutamate. PurL transfers the ammonia molecule to FGAR to form FGAM in an ATP-dependent manner. PurS interacts with PurQ and PurL and is thought to assist in the transfer of the ammonia molecule from PurQ to PurL. This chain is Phosphoribosylformylglycinamidine synthase subunit PurQ, found in Synechococcus sp. (strain CC9605).